A 152-amino-acid chain; its full sequence is Ribosome maturation factor RimP (152 aa).

It belongs to the RimP family.

It is found in the cytoplasm. Functionally, required for maturation of 30S ribosomal subunits. The polypeptide is Ribosome maturation factor RimP (Burkholderia orbicola (strain MC0-3)).